A 221-amino-acid chain; its full sequence is Proteasome subunit beta type-1 (221 aa).

Belongs to the peptidase T1B family. In terms of assembly, the 26S proteasome consists of a 20S proteasome core and two 19S regulatory subunits. The 20S proteasome core is composed of 28 subunits that are arranged in four stacked rings, resulting in a barrel-shaped structure. The two end rings are each formed by seven alpha subunits, and the two central rings are each formed by seven beta subunits. The catalytic chamber with the active sites is on the inside of the barrel.

The protein localises to the cytoplasm. It localises to the nucleus. Functionally, non-catalytic component of the proteasome, a multicatalytic proteinase complex which is characterized by its ability to cleave peptides with Arg, Phe, Tyr, Leu, and Glu adjacent to the leaving group at neutral or slightly basic pH. The proteasome has an ATP-dependent proteolytic activity. The chain is Proteasome subunit beta type-1 (PBF1) from Oryza sativa subsp. japonica (Rice).